Reading from the N-terminus, the 204-residue chain is Ribosomal RNA small subunit methyltransferase G (204 aa).

Residues Gly76, Leu81, 127–128 (IE), and Arg140 each bind S-adenosyl-L-methionine.

Belongs to the methyltransferase superfamily. RNA methyltransferase RsmG family.

Its subcellular location is the cytoplasm. The enzyme catalyses guanosine(527) in 16S rRNA + S-adenosyl-L-methionine = N(7)-methylguanosine(527) in 16S rRNA + S-adenosyl-L-homocysteine. Its function is as follows. Specifically methylates the N7 position of guanine in position 527 of 16S rRNA. The sequence is that of Ribosomal RNA small subunit methyltransferase G from Francisella philomiragia subsp. philomiragia (strain ATCC 25017 / CCUG 19701 / FSC 153 / O#319-036).